Consider the following 438-residue polypeptide: Thymidine phosphorylase (438 aa).

The protein belongs to the thymidine/pyrimidine-nucleoside phosphorylase family. In terms of assembly, homodimer.

It carries out the reaction thymidine + phosphate = 2-deoxy-alpha-D-ribose 1-phosphate + thymine. Its pathway is pyrimidine metabolism; dTMP biosynthesis via salvage pathway; dTMP from thymine: step 1/2. Its function is as follows. The enzymes which catalyze the reversible phosphorolysis of pyrimidine nucleosides are involved in the degradation of these compounds and in their utilization as carbon and energy sources, or in the rescue of pyrimidine bases for nucleotide synthesis. This Agrobacterium fabrum (strain C58 / ATCC 33970) (Agrobacterium tumefaciens (strain C58)) protein is Thymidine phosphorylase.